A 424-amino-acid polypeptide reads, in one-letter code: Serine--tRNA ligase (424 aa).

230 to 232 (TAE) serves as a coordination point for L-serine. An ATP-binding site is contributed by 261–263 (RAE). E284 is a binding site for L-serine. An ATP-binding site is contributed by 348 to 351 (EISS). S384 serves as a coordination point for L-serine.

The protein belongs to the class-II aminoacyl-tRNA synthetase family. Type-1 seryl-tRNA synthetase subfamily. As to quaternary structure, homodimer. The tRNA molecule binds across the dimer.

The protein resides in the cytoplasm. It carries out the reaction tRNA(Ser) + L-serine + ATP = L-seryl-tRNA(Ser) + AMP + diphosphate + H(+). The enzyme catalyses tRNA(Sec) + L-serine + ATP = L-seryl-tRNA(Sec) + AMP + diphosphate + H(+). The protein operates within aminoacyl-tRNA biosynthesis; selenocysteinyl-tRNA(Sec) biosynthesis; L-seryl-tRNA(Sec) from L-serine and tRNA(Sec): step 1/1. Functionally, catalyzes the attachment of serine to tRNA(Ser). Is also able to aminoacylate tRNA(Sec) with serine, to form the misacylated tRNA L-seryl-tRNA(Sec), which will be further converted into selenocysteinyl-tRNA(Sec). In Carboxydothermus hydrogenoformans (strain ATCC BAA-161 / DSM 6008 / Z-2901), this protein is Serine--tRNA ligase.